The following is a 216-amino-acid chain: Sarcospan (216 aa).

Over 1 to 26 (MGRKPSPRAQELPEEEARTCCGCRFP) the chain is Cytoplasmic. The chain crosses the membrane as a helical span at residues 27–47 (LLLALLQLALGIAVTVLGFLM). Residues 48–59 (ASISPSLLVRDT) are Extracellular-facing. The chain crosses the membrane as a helical span at residues 60–80 (PFWAGSIVCVVAYLGLFMLCV). At 81 to 95 (SYQVDERTCVQFSMK) the chain is on the cytoplasmic side. A helical transmembrane segment spans residues 96 to 116 (VFYFLLSALGLMVCMLAVAFA). The Extracellular portion of the chain corresponds to 117–166 (AHHYSLLAQFTCETSLDSCQCKLPSSEPLSRAFVYRDVTDCTSVTGTFKL). The helical transmembrane segment at 167–187 (FLIIQMVLNLVCGLVCLLACF) threads the bilayer. At 188-216 (VMWKHRYQVFYVGVGLRSLMASDGQLPKA) the chain is on the cytoplasmic side.

Its subcellular location is the cell membrane. It is found in the sarcolemma. The protein localises to the postsynaptic cell membrane. Component of the dystrophin-glycoprotein complex (DGC), a complex that spans the muscle plasma membrane and forms a link between the F-actin cytoskeleton and the extracellular matrix. Preferentially associates with the sarcoglycan subcomplex of the DGC. This Mus musculus (Mouse) protein is Sarcospan (Sspn).